The sequence spans 428 residues: tRNA(Ile)-lysidine synthase (428 aa).

Residue 28-33 (SGGVDS) coordinates ATP.

This sequence belongs to the tRNA(Ile)-lysidine synthase family.

It localises to the cytoplasm. It catalyses the reaction cytidine(34) in tRNA(Ile2) + L-lysine + ATP = lysidine(34) in tRNA(Ile2) + AMP + diphosphate + H(+). Ligates lysine onto the cytidine present at position 34 of the AUA codon-specific tRNA(Ile) that contains the anticodon CAU, in an ATP-dependent manner. Cytidine is converted to lysidine, thus changing the amino acid specificity of the tRNA from methionine to isoleucine. This chain is tRNA(Ile)-lysidine synthase, found in Streptococcus pyogenes serotype M3 (strain ATCC BAA-595 / MGAS315).